The chain runs to 157 residues: Phosphopantetheine adenylyltransferase (157 aa).

Ser-8 is a binding site for substrate. Residues 8–9 (SF) and His-16 contribute to the ATP site. Substrate contacts are provided by Lys-40, Thr-72, and Arg-86. ATP contacts are provided by residues 87–89 (GLR), Glu-97, and 122–128 (HSFLSSS).

This sequence belongs to the bacterial CoaD family. As to quaternary structure, homohexamer. Mg(2+) is required as a cofactor.

Its subcellular location is the cytoplasm. The catalysed reaction is (R)-4'-phosphopantetheine + ATP + H(+) = 3'-dephospho-CoA + diphosphate. Its pathway is cofactor biosynthesis; coenzyme A biosynthesis; CoA from (R)-pantothenate: step 4/5. Reversibly transfers an adenylyl group from ATP to 4'-phosphopantetheine, yielding dephospho-CoA (dPCoA) and pyrophosphate. The chain is Phosphopantetheine adenylyltransferase from Prochlorococcus marinus (strain MIT 9303).